The primary structure comprises 346 residues: Holliday junction branch migration complex subunit RuvB (346 aa).

A large ATPase domain (RuvB-L) region spans residues 1–182 (MSEAARLIAP…FGIPVRLNFY (182 aa)). Residues leucine 21, arginine 22, glycine 63, lysine 66, threonine 67, threonine 68, 129–131 (EDF), arginine 172, tyrosine 182, and arginine 219 each bind ATP. Residue threonine 67 coordinates Mg(2+). The small ATPAse domain (RuvB-S) stretch occupies residues 183–253 (TVEELELIVR…IADEALTRLL (71 aa)). The tract at residues 256–346 (SMGLDQLDRR…SQFRLTLEDD (91 aa)) is head domain (RuvB-H). Positions 292, 311, and 316 each coordinate DNA.

It belongs to the RuvB family. As to quaternary structure, homohexamer. Forms an RuvA(8)-RuvB(12)-Holliday junction (HJ) complex. HJ DNA is sandwiched between 2 RuvA tetramers; dsDNA enters through RuvA and exits via RuvB. An RuvB hexamer assembles on each DNA strand where it exits the tetramer. Each RuvB hexamer is contacted by two RuvA subunits (via domain III) on 2 adjacent RuvB subunits; this complex drives branch migration. In the full resolvosome a probable DNA-RuvA(4)-RuvB(12)-RuvC(2) complex forms which resolves the HJ.

The protein localises to the cytoplasm. The enzyme catalyses ATP + H2O = ADP + phosphate + H(+). In terms of biological role, the RuvA-RuvB-RuvC complex processes Holliday junction (HJ) DNA during genetic recombination and DNA repair, while the RuvA-RuvB complex plays an important role in the rescue of blocked DNA replication forks via replication fork reversal (RFR). RuvA specifically binds to HJ cruciform DNA, conferring on it an open structure. The RuvB hexamer acts as an ATP-dependent pump, pulling dsDNA into and through the RuvAB complex. RuvB forms 2 homohexamers on either side of HJ DNA bound by 1 or 2 RuvA tetramers; 4 subunits per hexamer contact DNA at a time. Coordinated motions by a converter formed by DNA-disengaged RuvB subunits stimulates ATP hydrolysis and nucleotide exchange. Immobilization of the converter enables RuvB to convert the ATP-contained energy into a lever motion, pulling 2 nucleotides of DNA out of the RuvA tetramer per ATP hydrolyzed, thus driving DNA branch migration. The RuvB motors rotate together with the DNA substrate, which together with the progressing nucleotide cycle form the mechanistic basis for DNA recombination by continuous HJ branch migration. Branch migration allows RuvC to scan DNA until it finds its consensus sequence, where it cleaves and resolves cruciform DNA. This Sinorhizobium medicae (strain WSM419) (Ensifer medicae) protein is Holliday junction branch migration complex subunit RuvB.